Here is a 4473-residue protein sequence, read N- to C-terminus: Plectin (4473 aa).

2 Calponin-homology (CH) domains span residues 1-74 (DGHN…LHFQ) and 87-192 (MTAK…DAMP). Residues 1 to 192 (DGHNLISLLE…YVSSLYDAMP (192 aa)) are actin-binding. The globular 1 stretch occupies residues 1 to 1259 (DGHNLISLLE…SELTTLTSQY (1259 aa)). One copy of the Spectrin 1 repeat lies at 449 to 508 (RYLQDLLAWVEENQRRIDSAEWGVDLPSVEAQLGSHRGMHQSIEEFRAKIERARNDESQL). Serine 509 is modified (phosphoserine). Spectrin repeat units follow at residues 529–613 (KLLN…REDH) and 626–719 (LQTQ…AIVQ). Threonine 604 is modified (phosphothreonine). In terms of domain architecture, SH3 spans 730–787 (RGHVPLMAVCDYKQVEVTVHKGDQCQLVGPAQPSHWKVLRGPSSEAAVPSVCFLVPPP). A Phosphoserine modification is found at serine 836. One copy of the Spectrin 4 repeat lies at 1104–1204 (RERVNQLLER…QKFAKQYINA (101 aa)). The residue at position 1224 (serine 1224) is a Phosphoserine. Residues 1258-2548 (QYIKFISETL…EEIAATQAAA (1291 aa)) adopt a coiled-coil conformation. Residues 1260–2544 (IKFISETLRR…LAHSEEIAAT (1285 aa)) are central fibrous rod domain. 2 disordered regions span residues 1274–1293 (ERLA…EGEA) and 1407–1434 (RAEE…DESQ). The residue at position 1510 (serine 1510) is a Phosphoserine. At lysine 1514 the chain carries N6-acetyllysine. Disordered regions lie at residues 1529 to 1550 (VTQL…ERAR), 1582 to 1616 (SLAQ…RELA), 1881 to 1929 (AEDT…AARQ), 1950 to 1971 (LRER…AAQK), and 2003 to 2098 (ERLR…KHKK). 3 stretches are compositionally biased toward basic and acidic residues: residues 1587–1616 (DAEK…RELA), 1881–1897 (AEDT…EAAR), and 1905–1917 (EEQR…ERVQ). The span at 1959–1968 (ARQLQLAQEA) shows a compositional bias: low complexity. Over residues 2003–2047 (ERLRGEAEAARRAAEEAEEAREQAEREAAQSRKQVEEAERLKQSA) the composition is skewed to basic and acidic residues. Residues 2048–2061 (EEQAQARAQAQAAA) are compositionally biased toward low complexity. The span at 2062-2077 (EKLRKEAEQEAARRAQ) shows a compositional bias: basic and acidic residues. Position 2420 is a phosphoserine (serine 2420). At lysine 2425 the chain carries N6-acetyllysine. The interval 2457-2476 (REEQQRQQRQMEQEKQELVA) is disordered. Residues 2545 to 4473 (QAAAAKALPN…SLGGPESAVA (1929 aa)) are globular 2. Phosphoserine occurs at positions 2563 and 2591. Plectin repeat units follow at residues 2615–2652 (RQYL…PGTA), 2653–2690 (LILL…PELH), 2691–2728 (HKLL…RDHA), 2729–2766 (IRLL…EEMS), and 2770–2804 (ADPG…PETG). At threonine 2675 the chain carries Phosphothreonine. Tyrosine 2822 carries the phosphotyrosine modification. Residues lysine 2842 and lysine 2880 each carry the N6-acetyllysine modification. Plectin repeat units follow at residues 2905–2942 (ALVP…ADSV), 2943–2980 (RRAL…PDVA), 2981–3018 (VALL…PELH), 3019–3056 (EKLL…REQG), and 3057–3094 (LRLL…KETN). Position 3151 is a phosphotyrosine (tyrosine 3151). The residue at position 3209 (lysine 3209) is an N6-acetyllysine. Plectin repeat units follow at residues 3274-3311 (RTLL…PSTA), 3312-3349 (TLLL…PELH), 3350-3387 (EKLL…REHA), 3388-3425 (IRLL…EEMS), and 3429-3463 (ADPS…PETG). Residue threonine 3574 is modified to Phosphothreonine. Tyrosine 3579 carries the phosphotyrosine modification. Plectin repeat units follow at residues 3609-3646 (WRYL…AEVA), 3647-3684 (RLLL…PELH), 3685-3722 (DRLL…AEEA), 3723-3760 (LRLL…KDTH), 3764-3797 (SEPS…DGSG), and 3800-3834 (LLPL…EATA). Threonine 3819 is subject to Phosphothreonine. Serine 3843 carries the post-translational modification Phosphoserine. Plectin repeat units lie at residues 3852–3889 (QKFL…PGTA), 3890–3927 (FELL…PEFK), 3928–3965 (DRLL…KDHG), 3966–4003 (IRLL…EEMN), 4007–4041 (TDPS…PQTG), and 4043–4094 (RLLP…HQTY). The binding to intermediate filaments stretch occupies residues 4039 to 4089 (QTGLRLLPLKEKKRERKTSSKSSVRKRRVVIVDPETSKEMSVYEAYRKGLI). A phosphoserine mark is found at serine 4171, serine 4173, serine 4174, serine 4175, serine 4178, serine 4179, serine 4180, and serine 4181. Tyrosine 4182 carries the post-translational modification Phosphotyrosine. Residues serine 4185, serine 4189, and serine 4195 each carry the phosphoserine modification. Plectin repeat units follow at residues 4197–4234 (SDPT…NITG), 4235–4272 (QRLL…KIMV), 4273–4310 (DRIN…YEAG), 4311–4348 (QRFL…ARTA), and 4349–4386 (QKLR…EGTG). At threonine 4200 the chain carries Phosphothreonine. At threonine 4328 the chain carries Phosphothreonine; by CDK1. A phosphoserine mark is found at serine 4396 and serine 4402. Low complexity predominate over residues 4400–4460 (YYSPYSVSGS…SGYGRRYASG (61 aa)). The disordered stretch occupies residues 4400–4473 (YYSPYSVSGS…SLGGPESAVA (74 aa)). Position 4404 is a phosphotyrosine (tyrosine 4404). A phosphoserine mark is found at serine 4405, serine 4407, and serine 4411. Threonine 4412 is subject to Phosphothreonine. Residues 4414-4429 (GSRTGSRTGSRAGSRR) form a 4 X 4 AA tandem repeats of G-S-R-X region. Residue serine 4415 is modified to Phosphoserine. Arginine 4416 and arginine 4429 each carry omega-N-methylarginine. Phosphoserine occurs at positions 4431 and 4464.

This sequence belongs to the plakin or cytolinker family. Homodimer or homotetramer. Interacts (via actin-binding domain) with SYNE3. Interacts (via calponin-homology (CH) 1 domain) with VIM (via rod region). Interacts (via N-terminus) with DST isoform 2 (via N-terminus). Interacts with FER. Interacts with TOR1A. Interacts with ANK3. Identified in complexes that contain VIM, EZR, AHNAK, BFSP1, BFSP2, ANK2, PLEC, PRX and spectrin. Phosphorylated by CDK1; regulates dissociation from intermediate filaments during mitosis.

It is found in the cytoplasm. The protein resides in the cytoskeleton. The protein localises to the cell junction. Its subcellular location is the hemidesmosome. It localises to the cell projection. It is found in the podosome. Interlinks intermediate filaments with microtubules and microfilaments and anchors intermediate filaments to desmosomes or hemidesmosomes. May be involved not only in the cross-linking and stabilization of cytoskeletal intermediate filaments network, but also in the regulation of their dynamics. This Cricetulus griseus (Chinese hamster) protein is Plectin (PLEC).